A 46-amino-acid polypeptide reads, in one-letter code: Light-harvesting protein B-800/850 beta 2 chain (46 aa).

Over 2–25 (AERSLSGLTEEEAVAVHAQFQTTF) the chain is Cytoplasmic. Histidine 18 and histidine 36 together coordinate a bacteriochlorophyll. A helical transmembrane segment spans residues 26 to 46 (SAFIVLAAVAHVLVWVWKPWF).

It belongs to the antenna complex beta subunit family. The core complex is formed by different alpha and beta chains, binding bacteriochlorophyll molecules, and arranged most probably in tetrameric structures disposed around the reaction center.

It localises to the cell inner membrane. Its function is as follows. Antenna complexes are light-harvesting systems, which transfer the excitation energy to the reaction centers. This chain is Light-harvesting protein B-800/850 beta 2 chain (B2), found in Magnetospirillum molischianum (Rhodospirillum molischianum).